Here is a 92-residue protein sequence, read N- to C-terminus: MTKRTKKAGIVGKYGTRYGASLRKQIKKMEVSQHSKYFCEFCGKFAVKRKAVGIWGCKDCGKVKAGGAYTMNTASAVTVRSTIRRLREQTEA.

A C4-type zinc finger spans residues 39–60; that stretch reads CEFCGKFAVKRKAVGIWGCKDC.

It belongs to the eukaryotic ribosomal protein eL43 family.

The sequence is that of Large ribosomal subunit protein eL43z from Oryza sativa subsp. japonica (Rice).